The following is a 420-amino-acid chain: Coiled-coil domain-containing protein 85C (420 aa).

A2 is subject to N-acetylalanine. Coiled-coil stretches lie at residues 26 to 92 (ELLR…RELC) and 122 to 165 (HEVA…LAAA). The disordered stretch occupies residues 165–271 (AGGAGGGGGG…NGLHDPSSTY (107 aa)). Residues 166–176 (GGAGGGGGGAG) are compositionally biased toward gly residues. S179 bears the Phosphoserine mark. Residues 185-212 (ASLSGPLAGSAAGSGARDVGDGSSTSSA) show a composition bias toward low complexity. The residue at position 247 (S247) is a Phosphoserine.

The protein belongs to the CCDC85 family. May interact with ARVCF, CTNND1, CTNND2 and PKP4. As to expression, predominantly expressed on the surface of the lateral ventricular walls of the developing cerebral cortex.

It is found in the cell junction. Its subcellular location is the tight junction. The protein localises to the adherens junction. May play a role in cell-cell adhesion and epithelium development through its interaction with proteins of the beta-catenin family. May play an important role in cortical development, especially in the maintenance of radial glia. The protein is Coiled-coil domain-containing protein 85C (Ccdc85c) of Mus musculus (Mouse).